Reading from the N-terminus, the 527-residue chain is Peptide chain release factor 3 (527 aa).

In terms of domain architecture, tr-type G spans 9–277 (AKRRTFAIIS…AVVNWAPKPL (269 aa)). GTP is bound by residues 18–25 (SHPDAGKT), 86–90 (DTPGH), and 140–143 (NKLD).

Belongs to the TRAFAC class translation factor GTPase superfamily. Classic translation factor GTPase family. PrfC subfamily.

It localises to the cytoplasm. Functionally, increases the formation of ribosomal termination complexes and stimulates activities of RF-1 and RF-2. It binds guanine nucleotides and has strong preference for UGA stop codons. It may interact directly with the ribosome. The stimulation of RF-1 and RF-2 is significantly reduced by GTP and GDP, but not by GMP. The sequence is that of Peptide chain release factor 3 from Pseudomonas savastanoi pv. phaseolicola (strain 1448A / Race 6) (Pseudomonas syringae pv. phaseolicola (strain 1448A / Race 6)).